A 996-amino-acid polypeptide reads, in one-letter code: Poly [ADP-ribose] polymerase (996 aa).

A DNA-binding region spans residues 1–369; it reads MEIDLPFKVE…TSTILKNISL (369 aa). 2 consecutive PARP-type zinc fingers follow at residues 7 to 89 and 114 to 203; these read FKVE…DNCT and FGIE…PVIK. Zn(2+)-binding residues include C19, C22, H51, C54, C126, C129, H161, and C164. 2 consecutive short sequence motifs (nuclear localization signal) follow at residues 211 to 214 and 232 to 235; these read KKAK and KIKK. One can recognise a PADR1 zinc-binding domain in the interval 220-358; sequence EEDAASIKEL…EVRAIRYIPP (139 aa). A zinc ribbon region spans residues 286–329; that stretch reads GALLPCTDCKGRQLLFHKSGYLCNGDLTEWTKCTKLLKEPERKS. 4 residues coordinate Zn(2+): C291, C294, C308, and C318. The segment at 370–507 is automodification domain; the sequence is KKGDELDGPK…SIYTKSVPKS (138 aa). Residues 382 to 473 form the BRCT domain; the sequence is RERPPLYNIE…AGAINYISSM (92 aa). In terms of domain architecture, WGR spans 527–625; that stretch reads VAHVYVSRNK…ENFVKVAGRM (99 aa). One can recognise a PARP alpha-helical domain in the interval 647-764; it reads KSKLPLSVQD…EIECAYSLLQ (118 aa). Residues 773–996 form the PARP catalytic domain; it reads NPIDKHYEQL…YMLRMNFKYK (224 aa).

This sequence belongs to the ARTD/PARP family.

It localises to the nucleus. It carries out the reaction NAD(+) + (ADP-D-ribosyl)n-acceptor = nicotinamide + (ADP-D-ribosyl)n+1-acceptor + H(+).. The enzyme catalyses L-aspartyl-[protein] + NAD(+) = 4-O-(ADP-D-ribosyl)-L-aspartyl-[protein] + nicotinamide. It catalyses the reaction L-glutamyl-[protein] + NAD(+) = 5-O-(ADP-D-ribosyl)-L-glutamyl-[protein] + nicotinamide. Poly-ADP-ribosyltransferase that mediates poly-ADP-ribosylation of proteins and plays a key role in DNA repair. Mainly mediates glutamate and aspartate ADP-ribosylation of target proteins: the ADP-D-ribosyl group of NAD(+) is transferred to the acceptor carboxyl group of glutamate and aspartate residues and further ADP-ribosyl groups are transferred to the 2'-position of the terminal adenosine moiety, building up a polymer with an average chain length of 20-30 units. This is Poly [ADP-ribose] polymerase from Sarcophaga peregrina (Flesh fly).